Reading from the N-terminus, the 611-residue chain is Methionine--tRNA ligase (611 aa).

The 'HIGH' region motif lies at 12-22 (PYANGPRHIGH). 4 residues coordinate Zn(2+): cysteine 144, cysteine 147, cysteine 157, and cysteine 160. The short motif at 348 to 352 (KFSSS) is the 'KMSKS' region element. Serine 351 contributes to the ATP binding site.

This sequence belongs to the class-I aminoacyl-tRNA synthetase family. MetG type 1 subfamily. As to quaternary structure, monomer. The cofactor is Zn(2+).

It localises to the cytoplasm. It carries out the reaction tRNA(Met) + L-methionine + ATP = L-methionyl-tRNA(Met) + AMP + diphosphate. Its function is as follows. Is required not only for elongation of protein synthesis but also for the initiation of all mRNA translation through initiator tRNA(fMet) aminoacylation. The sequence is that of Methionine--tRNA ligase from Corynebacterium urealyticum (strain ATCC 43042 / DSM 7109).